The sequence spans 427 residues: Serine hydroxymethyltransferase (427 aa).

(6S)-5,6,7,8-tetrahydrofolate-binding positions include Leu124 and 128-130 (GHL). An N6-(pyridoxal phosphate)lysine modification is found at Lys233.

This sequence belongs to the SHMT family. Homodimer. Pyridoxal 5'-phosphate serves as cofactor.

Its subcellular location is the cytoplasm. It catalyses the reaction (6R)-5,10-methylene-5,6,7,8-tetrahydrofolate + glycine + H2O = (6S)-5,6,7,8-tetrahydrofolate + L-serine. The protein operates within one-carbon metabolism; tetrahydrofolate interconversion. It functions in the pathway amino-acid biosynthesis; glycine biosynthesis; glycine from L-serine: step 1/1. Its function is as follows. Catalyzes the reversible interconversion of serine and glycine with tetrahydrofolate (THF) serving as the one-carbon carrier. This reaction serves as the major source of one-carbon groups required for the biosynthesis of purines, thymidylate, methionine, and other important biomolecules. Also exhibits THF-independent aldolase activity toward beta-hydroxyamino acids, producing glycine and aldehydes, via a retro-aldol mechanism. This is Serine hydroxymethyltransferase from Paracoccus denitrificans (strain Pd 1222).